The primary structure comprises 536 residues: Pre-mRNA-splicing factor SLU7 (536 aa).

Residues 22-42 (EARKAGLAPAEVDEDGKEINP) are disordered. The segment at 94–111 (GACENCGAMTHDKKSCME) adopts a CCHC-type zinc-finger fold. Residues 178-201 (KLEEKDGEEGDENVASEEEDEEDG) form a disordered region. Over residues 182 to 200 (KDGEEGDENVASEEEDEED) the composition is skewed to acidic residues.

This sequence belongs to the SLU7 family.

It is found in the nucleus. In terms of biological role, participates in the second catalytic step of pre-mRNA splicing, when the free hydroxyl group of exon I attacks the 3'-splice site to generate spliced mRNA and the excised lariat intron. This chain is Pre-mRNA-splicing factor SLU7, found in Oryza sativa subsp. indica (Rice).